Consider the following 155-residue polypeptide: Protein LOL2 (155 aa).

Residue M1 is modified to N-acetylmethionine. Residues 1–35 are disordered; sequence MEEIQQQTQKEEQKHREEEEEEEEGPPPGWESAVL. Putative zinc finger stretches follow at residues 60-90 and 98-128; these read QMVC…VNLV and QVNC…VTDI. Residues 130 to 155 form a disordered region; sequence ENNKRPPWSEQQGPLKSLSSLRRAEN. A compositionally biased stretch (polar residues) spans 138-149; that stretch reads SEQQGPLKSLSS.

It is found in the nucleus. Putative zinc finger that may be involved in programmed cell death and defense response. In Arabidopsis thaliana (Mouse-ear cress), this protein is Protein LOL2 (LOL2).